The primary structure comprises 493 residues: Chaperone SurA (493 aa).

Residues 1-33 (MKRQAFSLLSRLNPWQQLLLSAVLVTLAAPAAA) form the signal peptide. The disordered stretch occupies residues 46 to 76 (FTQQGSQSASQGSTVAPSQPMMGVPQPSSQP). Residues 48-58 (QQGSQSASQGS) show a composition bias toward low complexity. 2 PpiC domains span residues 230-332 (PTEF…KLVS) and 346-444 (IAQT…QVEN).

It is found in the periplasm. It carries out the reaction [protein]-peptidylproline (omega=180) = [protein]-peptidylproline (omega=0). Its function is as follows. Chaperone involved in the correct folding and assembly of outer membrane proteins. Recognizes specific patterns of aromatic residues and the orientation of their side chains, which are found more frequently in integral outer membrane proteins. May act in both early periplasmic and late outer membrane-associated steps of protein maturation. In Cupriavidus metallidurans (strain ATCC 43123 / DSM 2839 / NBRC 102507 / CH34) (Ralstonia metallidurans), this protein is Chaperone SurA.